The primary structure comprises 539 residues: MTNIGDHNAAHGAEAAGFRDLKAVHWNFEAPRLYEEALSRKEAQLARGGAIVATTGSHTGRSPKDKFVVRDAGTENEVWWDNNGAITPEQFETLRQDFLKHAEGRELFAQDLYGGADPAYRVKARVFTEFAWHSLFIRNLLIRPDRSEIASYVPDMTIIDLPSFQADPARHGCRSKTVIAIDFSKKLVLIGGSAYAGEMKKSVFTYLNYILPGQGVMPMHCSANAALDAEGGSAIFFGLSGTGKTTLSNDSSRQLLGDDEHGWSNSGIFNFEGGCYAKTIRLSRNAEPEIYATTERFGTVMENVIIDPVTRVPDFDDASLTENTRCAYPLDFIANASATGRAGHPKNIVMLTCDAFGVMPPIAKLTGAEAMYHFLSGYTAKVAGTERGLTGPEATFSTCFGAPFMPRHPSTYGNLLRDLIAKHSVDCWLVNTGWTGGGVGTGRRMPIRVTRRLLSAALDGSLAQAEFRRDPYFGFAVPVSVPGVEPHILTPVKTWANKGAFVETAARLVKMFDDNFKRFEDHVDADVRSAGPTAQAIAA.

The substrate site is built by Arg-61, Tyr-195, and Lys-201. ATP is bound by residues Lys-201, His-220, and 238-246 (GLSGTGKTT). Mn(2+) contacts are provided by Lys-201 and His-220. Mn(2+) is bound at residue Asp-259. The ATP site is built by Glu-287, Arg-325, and Thr-450. Residue Arg-325 coordinates substrate.

The protein belongs to the phosphoenolpyruvate carboxykinase (ATP) family. It depends on Mn(2+) as a cofactor.

The protein localises to the cytoplasm. The catalysed reaction is oxaloacetate + ATP = phosphoenolpyruvate + ADP + CO2. The protein operates within carbohydrate biosynthesis; gluconeogenesis. Functionally, involved in the gluconeogenesis. Catalyzes the conversion of oxaloacetate (OAA) to phosphoenolpyruvate (PEP) through direct phosphoryl transfer between the nucleoside triphosphate and OAA. The chain is Phosphoenolpyruvate carboxykinase (ATP) from Methylobacterium radiotolerans (strain ATCC 27329 / DSM 1819 / JCM 2831 / NBRC 15690 / NCIMB 10815 / 0-1).